The primary structure comprises 504 residues: Maturase K (504 aa).

This sequence belongs to the intron maturase 2 family. MatK subfamily.

It localises to the plastid. Its subcellular location is the chloroplast. In terms of biological role, usually encoded in the trnK tRNA gene intron. Probably assists in splicing its own and other chloroplast group II introns. The protein is Maturase K of Vigna unguiculata (Cowpea).